We begin with the raw amino-acid sequence, 435 residues long: 5-methylthioadenosine/S-adenosylhomocysteine deaminase (435 aa).

His65 and His67 together coordinate Zn(2+). The substrate site is built by Glu94, Arg150, and His189. Residue His216 coordinates Zn(2+). Residues Glu219 and Asp304 each contribute to the substrate site. Asp304 contributes to the Zn(2+) binding site.

This sequence belongs to the metallo-dependent hydrolases superfamily. MTA/SAH deaminase family. Zn(2+) is required as a cofactor.

It carries out the reaction S-adenosyl-L-homocysteine + H2O + H(+) = S-inosyl-L-homocysteine + NH4(+). The enzyme catalyses S-methyl-5'-thioadenosine + H2O + H(+) = S-methyl-5'-thioinosine + NH4(+). Its function is as follows. Catalyzes the deamination of 5-methylthioadenosine and S-adenosyl-L-homocysteine into 5-methylthioinosine and S-inosyl-L-homocysteine, respectively. Is also able to deaminate adenosine. This Bacillus cereus (strain ZK / E33L) protein is 5-methylthioadenosine/S-adenosylhomocysteine deaminase.